The chain runs to 562 residues: Pentatricopeptide repeat-containing protein At3g22670, mitochondrial (562 aa).

A mitochondrion-targeting transit peptide spans 1 to 31; that stretch reads MLTKLRISKLVSYTLPRRIFQRRFLVTNNTA. PPR repeat units lie at residues 165–199, 202–232, 238–268, 272–306, 307–341, 342–376, 377–411, 412–446, 450–484, and 485–519; these read SGHTYNAMVDVLGKCRNFDLMWELVNEMNKNEESK, TLDTMSKVMRRLAKSGKYNKAVDAFLEMEKS, DTIAMNSLMDALVKENSIEHAHEVFLKLFDT, DARTFNILIHGFCKARKFDDARAMMDLMKVTEFTP, DVVTYTSFVEAYCKEGDFRRVNEMLEEMRENGCNP, NVVTYTIVMHSLGKSKQVAEALGVYEKMKEDGCVP, DAKFYSSLIHILSKTGRFKDAAEIFEDMTNQGVRR, DVLVYNTMISAALHHSRDEMALRLLKRMEDEEGES, NVETYAPLLKMCCHKKKMKLLGILLHHMVKNDVSI, and DVSTYILLIRGLCMSGKVEEACLFFEEAVRKGMVP.

The protein belongs to the PPR family. P subfamily.

It localises to the mitochondrion. The protein is Pentatricopeptide repeat-containing protein At3g22670, mitochondrial of Arabidopsis thaliana (Mouse-ear cress).